Reading from the N-terminus, the 320-residue chain is Cytochrome f (320 aa).

The first 35 residues, 1-35 (MQTRKTFSWIKEQIARSISVSLLIYIITRTSISSA), serve as a signal peptide directing secretion. 4 residues coordinate heme: Tyr36, Cys56, Cys59, and His60. The chain crosses the membrane as a helical span at residues 286–306 (VQGLLFFLASVILAQIFLVLK).

The protein belongs to the cytochrome f family. As to quaternary structure, the 4 large subunits of the cytochrome b6-f complex are cytochrome b6, subunit IV (17 kDa polypeptide, petD), cytochrome f and the Rieske protein, while the 4 small subunits are PetG, PetL, PetM and PetN. The complex functions as a dimer. It depends on heme as a cofactor.

It localises to the plastid. The protein localises to the chloroplast thylakoid membrane. Component of the cytochrome b6-f complex, which mediates electron transfer between photosystem II (PSII) and photosystem I (PSI), cyclic electron flow around PSI, and state transitions. The protein is Cytochrome f of Jasminum nudiflorum (Winter jasmine).